Reading from the N-terminus, the 92-residue chain is MARSIWKGPFVDGYLIKKVQKLMESGKSEMIKTWSRRSTILPIFVGFTFSVHNGNKFIPVSVNEEMVGRKLGEFAPTRTFHGHGADKKVKRK.

The protein belongs to the universal ribosomal protein uS19 family.

Protein S19 forms a complex with S13 that binds strongly to the 16S ribosomal RNA. The chain is Small ribosomal subunit protein uS19 from Rickettsia felis (strain ATCC VR-1525 / URRWXCal2) (Rickettsia azadi).